A 116-amino-acid polypeptide reads, in one-letter code: Small ribosomal subunit protein uS10m (116 aa).

Belongs to the universal ribosomal protein uS10 family.

Its subcellular location is the mitochondrion. The sequence is that of Small ribosomal subunit protein uS10m (RPS10) from Reclinomonas americana.